Here is a 288-residue protein sequence, read N- to C-terminus: Light-independent protochlorophyllide reductase iron-sulfur ATP-binding protein (288 aa).

ATP-binding positions include 10–15 (GIGKST) and lysine 39. Position 14 (serine 14) interacts with Mg(2+). [4Fe-4S] cluster contacts are provided by cysteine 95 and cysteine 129. ATP is bound at residue 180 to 181 (NR).

This sequence belongs to the NifH/BchL/ChlL family. In terms of assembly, homodimer. Protochlorophyllide reductase is composed of three subunits; ChlL, ChlN and ChlB. It depends on [4Fe-4S] cluster as a cofactor.

It carries out the reaction chlorophyllide a + oxidized 2[4Fe-4S]-[ferredoxin] + 2 ADP + 2 phosphate = protochlorophyllide a + reduced 2[4Fe-4S]-[ferredoxin] + 2 ATP + 2 H2O. The protein operates within porphyrin-containing compound metabolism; chlorophyll biosynthesis (light-independent). Its function is as follows. Component of the dark-operative protochlorophyllide reductase (DPOR) that uses Mg-ATP and reduced ferredoxin to reduce ring D of protochlorophyllide (Pchlide) to form chlorophyllide a (Chlide). This reaction is light-independent. The L component serves as a unique electron donor to the NB-component of the complex, and binds Mg-ATP. The polypeptide is Light-independent protochlorophyllide reductase iron-sulfur ATP-binding protein (Nostoc sp. (strain PCC 7120 / SAG 25.82 / UTEX 2576)).